The sequence spans 132 residues: Fluoride-specific ion channel FluC 2 (132 aa).

4 helical membrane-spanning segments follow: residues Leu-8–Leu-28, Leu-41–Pro-61, Leu-66–Val-86, and Ala-96–Phe-116. The Na(+) site is built by Gly-73 and Thr-76.

This sequence belongs to the fluoride channel Fluc/FEX (TC 1.A.43) family.

The protein resides in the cell inner membrane. The enzyme catalyses fluoride(in) = fluoride(out). With respect to regulation, na(+) is not transported, but it plays an essential structural role and its presence is essential for fluoride channel function. In terms of biological role, fluoride-specific ion channel. Important for reducing fluoride concentration in the cell, thus reducing its toxicity. This chain is Fluoride-specific ion channel FluC 2, found in Synechococcus sp. (strain CC9605).